Reading from the N-terminus, the 235-residue chain is MMQSREEIRDDSSSGLVLTTDPKPRLRWTTELHERFVDAVTHLGGPEKATPKTIMRVMGVKGLTLYHLKSHLQKFRLGKQPHKEHSQNHSICIRDTNRASMLDLRRNAVFTTSPLIIGRNMNEMQMEVQRRIEEEVVIERQVNQRIAAQGKYMESMLEKACETQEASLTKDYSTLFFDRTNICNNTSSIPIPWFEDHFPSSSSMDSTLILPDINSNFSLQDSRSSITKGRTVCLG.

The segment covering 1–12 has biased composition (basic and acidic residues); sequence MMQSREEIRDDS. Residues 1–20 form a disordered region; it reads MMQSREEIRDDSSSGLVLTT. The HTH myb-type domain maps to 20–80; sequence TDPKPRLRWT…HLQKFRLGKQ (61 aa). Residues 51 to 76 constitute a DNA-binding region (H-T-H motif); that stretch reads PKTIMRVMGVKGLTLYHLKSHLQKFR. The interval 119 to 139 is coiled coil; sequence RNMNEMQMEVQRRIEEEVVIE.

This sequence belongs to the MYB-CC family. In terms of tissue distribution, expressed in phloem and/or cambium.

The protein localises to the nucleus. In Arabidopsis thaliana (Mouse-ear cress), this protein is Myb family transcription factor PHL12.